Reading from the N-terminus, the 408-residue chain is UPF0761 membrane protein azo3165 (408 aa).

7 consecutive transmembrane segments (helical) span residues 29–49 (LAFT…GVFG), 92–112 (LTLI…ATIE), 131–151 (ITVS…SVVA), 172–192 (IAAA…LYYA), 197–217 (PVRL…FLLM), 220–240 (GLGL…TFAA), and 241–261 (LPIF…GALI).

This sequence belongs to the UPF0761 family.

It localises to the cell inner membrane. The sequence is that of UPF0761 membrane protein azo3165 from Azoarcus sp. (strain BH72).